The primary structure comprises 73 residues: Large ribosomal subunit protein bL31 (73 aa).

The protein belongs to the bacterial ribosomal protein bL31 family. Type A subfamily. In terms of assembly, part of the 50S ribosomal subunit.

Its function is as follows. Binds the 23S rRNA. This chain is Large ribosomal subunit protein bL31, found in Agrobacterium fabrum (strain C58 / ATCC 33970) (Agrobacterium tumefaciens (strain C58)).